The sequence spans 161 residues: Cyclic pyranopterin monophosphate synthase (161 aa).

Substrate is bound by residues 73-75 (LCH) and 110-111 (ME). Residue Asp-125 is part of the active site.

It belongs to the MoaC family. As to quaternary structure, homohexamer; trimer of dimers.

It catalyses the reaction (8S)-3',8-cyclo-7,8-dihydroguanosine 5'-triphosphate = cyclic pyranopterin phosphate + diphosphate. It functions in the pathway cofactor biosynthesis; molybdopterin biosynthesis. In terms of biological role, catalyzes the conversion of (8S)-3',8-cyclo-7,8-dihydroguanosine 5'-triphosphate to cyclic pyranopterin monophosphate (cPMP). The polypeptide is Cyclic pyranopterin monophosphate synthase (Pseudomonas savastanoi pv. phaseolicola (strain 1448A / Race 6) (Pseudomonas syringae pv. phaseolicola (strain 1448A / Race 6))).